A 241-amino-acid polypeptide reads, in one-letter code: Lactate utilization protein C (241 aa).

It belongs to the LutC/YkgG family.

Functionally, is involved in L-lactate degradation and allows cells to grow with lactate as the sole carbon source. This Bacillus velezensis (strain DSM 23117 / BGSC 10A6 / LMG 26770 / FZB42) (Bacillus amyloliquefaciens subsp. plantarum) protein is Lactate utilization protein C.